Here is a 179-residue protein sequence, read N- to C-terminus: Large ribosomal subunit protein uL5 (179 aa).

Belongs to the universal ribosomal protein uL5 family. In terms of assembly, part of the 50S ribosomal subunit; part of the 5S rRNA/L5/L18/L25 subcomplex. Contacts the 5S rRNA and the P site tRNA. Forms a bridge to the 30S subunit in the 70S ribosome.

This is one of the proteins that bind and probably mediate the attachment of the 5S RNA into the large ribosomal subunit, where it forms part of the central protuberance. In the 70S ribosome it contacts protein S13 of the 30S subunit (bridge B1b), connecting the 2 subunits; this bridge is implicated in subunit movement. Contacts the P site tRNA; the 5S rRNA and some of its associated proteins might help stabilize positioning of ribosome-bound tRNAs. This chain is Large ribosomal subunit protein uL5, found in Burkholderia mallei (strain ATCC 23344).